A 316-amino-acid polypeptide reads, in one-letter code: MNFQQLKIIREAARQDYNLTEVANMLYTSQSGVSRHIRELEEELGIEIFIRRGKRLLGMTEPGKALLSIAERILNEASNVRRLADLFTNDASGVLTIATTHTQARYSLPPVIKAFRELFSDVRVELVQGTPQEIEALLHNGGADIGIASERLSNDPTLAAFPWFRWHHSLLVPKDHPLTQVSPLTLEAIARWPLITYRQGITGRSRIDEAFNRKGLMPDIVLSAQDSDVIKTYVELGLGVGLVAEQSGDAREADTFTRLDTRHLFDANTVWLGLKRGQLQRNYVWRFIELCNAGLSLDEIKRQAMEPEEVAIDYQI.

An HTH lysR-type domain is found at 1-59 (MNFQQLKIIREAARQDYNLTEVANMLYTSQSGVSRHIRELEEELGIEIFIRRGKRLLGM). Residues 19-38 (LTEVANMLYTSQSGVSRHIR) constitute a DNA-binding region (H-T-H motif).

Belongs to the LysR transcriptional regulatory family.

Functionally, may be an accessory regulatory protein within the cys regulon. In Klebsiella aerogenes (Enterobacter aerogenes), this protein is HTH-type transcriptional regulator cbl (cbl).